Reading from the N-terminus, the 291-residue chain is Polyamine aminopropyltransferase (291 aa).

A PABS domain is found at 5 to 245; the sequence is PGPIVLMEPL…YAVNFVLGSL (241 aa). Residue Gln-36 participates in S-methyl-5'-thioadenosine binding. His-67 and Glu-91 together coordinate spermidine. S-methyl-5'-thioadenosine is bound by residues Asp-111 and 143-144; that span reads DG. Catalysis depends on Asp-164, which acts as the Proton acceptor.

It belongs to the spermidine/spermine synthase family. In terms of assembly, homodimer or homotetramer.

Its subcellular location is the cytoplasm. The enzyme catalyses norspermidine + S-adenosyl 3-(methylsulfanyl)propylamine = norspermine + S-methyl-5'-thioadenosine + H(+). The catalysed reaction is S-adenosyl 3-(methylsulfanyl)propylamine + spermidine = thermospermine + S-methyl-5'-thioadenosine + H(+). Involved in the biosynthesis of polyamines which are thought to support the growth of thermophilic microorganisms under high-temperature conditions. It seems that long-chain and branched-chain of polyamines effectively stabilize DNA and RNA, respectively. Catalyzes the irreversible transfer of a propylamine group from the amino donor S-adenosylmethioninamine (decarboxy-AdoMet) to norspermidine and 1,3-diaminopropane to yield norspermine, and to spermidine to yield thermospermine. It can also synthesize thermospermine from putrescine (1,4-diaminobutane) and caldopentamine from norspermine with a very low activity. The biosynthesis of caldohexamine and caldoheptamine from caldopentamine has been also observed. The chain is Polyamine aminopropyltransferase from Pyrobaculum aerophilum (strain ATCC 51768 / DSM 7523 / JCM 9630 / CIP 104966 / NBRC 100827 / IM2).